Here is a 291-residue protein sequence, read N- to C-terminus: Fructose-1,6-bisphosphatase class 1 1 (291 aa).

Residues Glu78, Asp95, Leu97, and Asp98 each contribute to the Mg(2+) site. Substrate-binding positions include 98 to 101 (DGSS), Tyr203, and Lys233. Glu239 lines the Mg(2+) pocket.

Belongs to the FBPase class 1 family. In terms of assembly, homotetramer. The cofactor is Mg(2+).

The protein localises to the cytoplasm. The enzyme catalyses beta-D-fructose 1,6-bisphosphate + H2O = beta-D-fructose 6-phosphate + phosphate. It functions in the pathway carbohydrate biosynthesis; gluconeogenesis. In Haloarcula marismortui (strain ATCC 43049 / DSM 3752 / JCM 8966 / VKM B-1809) (Halobacterium marismortui), this protein is Fructose-1,6-bisphosphatase class 1 1.